The chain runs to 297 residues: E3 ubiquitin-protein ligase TRIM52 (297 aa).

Residues 20–62 (CAICLDYFKDPVSISCGHNFCRGCVTQLWSKEDEEDQNEEEDE) form an RING-type; degenerate zinc finger. The segment at 72 to 167 (VGAMDGWDGS…DEDEDEELYP (96 aa)) is important for rapid proteolytic degradation by the proteasome. The B box-type zinc finger occupies 222–263 (NDQGMCFKHQEALKLFCEVDKEAICVVCRESRSHKQHSVLPL). Residues Cys-227, His-230, Cys-249, and His-255 each coordinate Zn(2+).

Belongs to the TRIM/RBCC family. In terms of assembly, (Microbial infection) Interacts with Japanese encephalitis virus non-structural protein 2 (NS2A); mediates the ubiquitination of NS2A, targeting it for proteasome-mediated degradation. Autoubiquitinated. Polyubiquitinated. Undergoes extremely rapid proteolytic degradation by the proteasome.

It is found in the cytoplasm. It localises to the cytosol. Its subcellular location is the nucleus. The catalysed reaction is S-ubiquitinyl-[E2 ubiquitin-conjugating enzyme]-L-cysteine + [acceptor protein]-L-lysine = [E2 ubiquitin-conjugating enzyme]-L-cysteine + N(6)-ubiquitinyl-[acceptor protein]-L-lysine.. Its pathway is protein modification; protein ubiquitination. E3 ubiquitin-protein ligase. Positively regulates the NF-kappa-B signaling pathway. In terms of biological role, (Microbial infection) Exhibits antiviral activity against Japanese encephalitis virus (JEV). Ubiquitinates the viral non-structural protein 2 (NS2A) and targets it for proteasome-mediated degradation. This Homo sapiens (Human) protein is E3 ubiquitin-protein ligase TRIM52 (TRIM52).